The sequence spans 219 residues: uncharacterized protein (219 aa).

The N-terminal stretch at 1 to 22 (MKKRRKICYCNTALLLMILLAG) is a signal peptide. Cys23 carries N-palmitoyl cysteine lipidation. Cys23 carries the S-diacylglycerol cysteine lipid modification. Residues 26–89 (SKDGEAQQPS…SAEEKSKEDN (64 aa)) form a disordered region. Residues 32–42 (QQPSNQASAVQ) are compositionally biased toward polar residues. The span at 43 to 61 (TDEKHTEPEESTKIRKDEA) shows a compositional bias: basic and acidic residues.

It localises to the cell membrane. This is an uncharacterized protein from Bacillus subtilis (strain 168).